The following is a 430-amino-acid chain: Probable beta-1,3-galactosyl-O-glycosyl-glycoprotein beta-1,6-N-acetylglucosaminyltransferase 7 (430 aa).

Residues 1 to 8 (MSQLRATK) lie on the Cytoplasmic side of the membrane. A helical; Signal-anchor for type II membrane protein membrane pass occupies residues 9-25 (SGLVVRAVICIFIFLYL). Residues 26–430 (RNPTPAESEE…QSHFNMRLNR (405 aa)) are Extracellular-facing. Disulfide bonds link C53–C205, C139–C354, C160–C187, and C363–C395. The N-linked (GlcNAc...) asparagine glycan is linked to N87. N272 is a glycosylation site (N-linked (GlcNAc...) asparagine).

This sequence belongs to the glycosyltransferase 14 family.

The protein localises to the golgi apparatus membrane. It functions in the pathway protein modification; protein glycosylation. In terms of biological role, probable glycosyltransferase. This chain is Probable beta-1,3-galactosyl-O-glycosyl-glycoprotein beta-1,6-N-acetylglucosaminyltransferase 7, found in Homo sapiens (Human).